The primary structure comprises 78 residues: Large ribosomal subunit protein eL20 (78 aa).

Belongs to the eukaryotic ribosomal protein eL20 family. As to quaternary structure, part of the 50S ribosomal subunit. Binds 23S rRNA.

The sequence is that of Large ribosomal subunit protein eL20 from Nanoarchaeum equitans (strain Kin4-M).